A 298-amino-acid polypeptide reads, in one-letter code: MIIRVGSRASRLALIQAQAVVQKINDLLGLNAIIIPIKTTGDLIQNKNLYDIGGKGLFLKEIEYALLNNTIDIAVHSLKDVPAYLPDGLQLAAVLERGDVGDMLVSKIANKITDLPLGAIVGTSSVRRRIQLLMLRPDLNIVLFRGNVDTRWNKIINNEVDATVLAAAGLQRLNYDTSRFCNIIPQSEMLPAIGQGAIAIEARKDDKLIMPLCAKINHQLTWQLIQVERGYLKTLNADCNVPIGGIASYIGNNSFEAKFMLGDYNMRYFFYSEVRGKLQHGYDIGVEAAKNFQKRLFI.

Position 239 is an S-(dipyrrolylmethanemethyl)cysteine (Cys239).

The protein belongs to the HMBS family. In terms of assembly, monomer. Requires dipyrromethane as cofactor.

The enzyme catalyses 4 porphobilinogen + H2O = hydroxymethylbilane + 4 NH4(+). Its pathway is porphyrin-containing compound metabolism; protoporphyrin-IX biosynthesis; coproporphyrinogen-III from 5-aminolevulinate: step 2/4. Functionally, tetrapolymerization of the monopyrrole PBG into the hydroxymethylbilane pre-uroporphyrinogen in several discrete steps. This is Porphobilinogen deaminase from Orientia tsutsugamushi (strain Boryong) (Rickettsia tsutsugamushi).